The following is a 101-amino-acid chain: Apolipoprotein C-II (101 aa).

Residues 1–22 form the signal peptide; the sequence is MGTRCLLVLLLVLLVLKCEVQG. Residues 23–28 constitute a propeptide, removed in mature form; the sequence is DDMARQ. The tract at residues 66-74 is lipid binding; the sequence is AMDEKIRDM. The segment at 78–101 is lipoprotein lipase cofactor; sequence STAAVRIYTGILTDQILSMLTGDP.

This sequence belongs to the apolipoprotein C2 family. In terms of processing, proapolipoprotein C-II is synthesized as a sialic acid containing glycoprotein which is subsequently desialylated prior to its proteolytic processing. Post-translationally, proapolipoprotein C-II, the major form found in plasma undergoes proteolytic cleavage of its N-terminal hexapeptide to generate the mature form apolipoprotein C-II, which occurs as the minor form in plasma.

The protein resides in the secreted. Functionally, component of chylomicrons, very low-density lipoproteins (VLDL), low-density lipoproteins (LDL), and high-density lipoproteins (HDL) in plasma. Plays an important role in lipoprotein metabolism as an activator of lipoprotein lipase, the enzyme which hydrolyzes the triacylglycerols on chylomicrons and VLDL. The chain is Apolipoprotein C-II (APOC2) from Panthera tigris altaica (Siberian tiger).